The chain runs to 1144 residues: ATP-dependent helicase/deoxyribonuclease subunit B (1144 aa).

In terms of domain architecture, UvrD-like helicase ATP-binding spans 1–276; it reads MAIRYVFGRA…IDLDRNERPV (276 aa). 8–15 contributes to the ATP binding site; that stretch reads GRAGRGKS. Residues 274–584 enclose the UvrD-like helicase C-terminal domain; that stretch reads RPVLPKVQEI…LVGSIERSKS (311 aa). [4Fe-4S] cluster-binding residues include C784, C1102, C1105, and C1111.

This sequence belongs to the helicase family. AddB/RexB type 1 subfamily. Heterodimer of AddA and AddB. It depends on Mg(2+) as a cofactor. [4Fe-4S] cluster is required as a cofactor.

The heterodimer acts as both an ATP-dependent DNA helicase and an ATP-dependent, dual-direction single-stranded exonuclease. Recognizes the chi site generating a DNA molecule suitable for the initiation of homologous recombination. The AddB subunit has 5' -&gt; 3' nuclease activity but not helicase activity. The protein is ATP-dependent helicase/deoxyribonuclease subunit B of Alkaliphilus oremlandii (strain OhILAs) (Clostridium oremlandii (strain OhILAs)).